The chain runs to 747 residues: Pseudouridine-metabolizing bifunctional protein C1861.05 (747 aa).

Positions 1–379 are pseudouridine-5'-phosphate glycosidase; sequence MLIVMNRGCR…KVSDKGVSSS (379 aa). The active-site Proton donor; for PsiMP glycosidase activity is glutamate 61. Substrate-binding residues include lysine 123 and valine 143. Aspartate 175 serves as a coordination point for Mn(2+). 177 to 179 provides a ligand contact to substrate; sequence SAD. Lysine 196 functions as the Nucleophile; for PsiMP glycosidase activity in the catalytic mechanism. The interval 380-747 is pseudouridine kinase; the sequence is KKKITETTSK…VNPEIKTLLK (368 aa).

In the N-terminal section; belongs to the pseudouridine-5'-phosphate glycosidase family. It in the C-terminal section; belongs to the carbohydrate kinase PfkB family. Mn(2+) serves as cofactor.

It localises to the cytoplasm. The catalysed reaction is D-ribose 5-phosphate + uracil = psi-UMP + H2O. It carries out the reaction pseudouridine + ATP = psi-UMP + ADP + H(+). Functionally, bifunctional enzyme that catalyzes the phosphorylation of pseudouridine to pseudouridine 5'-phosphate (PsiMP), and the reversible cleavage of pseudouridine 5'-phosphate to ribose 5-phosphate and uracil. Is involved in a pseudouridine degradation pathway. The polypeptide is Pseudouridine-metabolizing bifunctional protein C1861.05 (Schizosaccharomyces pombe (strain 972 / ATCC 24843) (Fission yeast)).